We begin with the raw amino-acid sequence, 170 residues long: Sec-independent protein translocase protein TATA, chloroplastic (170 aa).

A chloroplast-targeting transit peptide spans methionine 1–valine 61. Residues alanine 62 to cysteine 84 are Lumenal-facing. The helical transmembrane segment at leucine 85–glycine 105 threads the bilayer. The Stromal segment spans residues proline 106 to alanine 170. A compositionally biased stretch (basic and acidic residues) spans phenylalanine 130–glycine 139. The tract at residues phenylalanine 130–alanine 170 is disordered.

This sequence belongs to the TatA/E family. In terms of assembly, in thylakoid membranes, TATC and TATB form a large receptor complex, containing about eight TATC-TATB pairs, which binds the precursor protein. Twin arginine signal peptide promotes pH-triggered docking of TATA oligomers to TATC-TATB receptor complex, inducing a conformational switch of TATA that results in activation of the translocase. TATA dissociates from TATC-TATB upon completion of translocation.

The protein resides in the plastid. The protein localises to the chloroplast thylakoid membrane. In terms of biological role, part of the twin-arginine translocation (Tat) system that transports large folded proteins containing a characteristic twin-arginine motif in their signal peptide across the thylakoid membrane. Involved in delta pH-dependent protein transport required for chloroplast development, especially thylakoid membrane formation. TATC and TATB mediate precursor recognition, whereas TATA facilitates translocation. This is Sec-independent protein translocase protein TATA, chloroplastic from Zea mays (Maize).